The following is a 166-amino-acid chain: Anterior gradient protein 3 (166 aa).

The signal sequence occupies residues 1-21 (MMLHSALGLCLLLVTVSSNLA). Residues 163–166 (QSEL) carry the Prevents secretion from ER motif.

Belongs to the AGR family. In terms of assembly, interacts with LYPD3 and DAG1 (alphaDAG1). As to expression, expressed in the lung, in the ciliated cells of the airway epithelium. Expression increased with differentiation of airway epithelial cells. Not detected in the mucous cells. Expressed in ciliated cells in the oviduct. Also detected in stomach, colon, prostate and liver. Expressed in breast, ovary, prostate and liver cancer. Expression is associated with the level of differentiation of breast cancer (at protein level).

It localises to the endoplasmic reticulum. Its function is as follows. Required for calcium-mediated regulation of ciliary beat frequency and mucociliary clearance in the airway. Might be involved in the regulation of intracellular calcium in tracheal epithelial cells. The chain is Anterior gradient protein 3 (AGR3) from Homo sapiens (Human).